The sequence spans 188 residues: MTQSVPAIFLDRDGTVNVDHGYVHEIDNFQFIDGVIDACRELKEMGFALVLVTNQSGIARGMFTEEQFLSLTEWMDWSLADRGVDLDGIYFCPHHPDGSVAEFSETCECRKPLPGMLLQAQNELNIDMAASYMVGDKIEDMQAALAANIGTKVLVRTGKPVTAEGEAAADWVLNSLADLPKAIKARYK.

The active-site Nucleophile is aspartate 11. 2 residues coordinate Mg(2+): aspartate 11 and aspartate 13. Substrate-binding positions include 11-13, 19-22, and 53-56; these read DRD, DHGY, and TNQS. The active-site Proton donor is the aspartate 13. Cysteine 92, histidine 94, cysteine 107, and cysteine 109 together coordinate Zn(2+). 110–111 contributes to the substrate binding site; sequence RK. Positions 136 and 137 each coordinate Mg(2+). Lysine 137 is a binding site for substrate.

This sequence belongs to the GmhB family. In terms of assembly, monomer. It depends on Mg(2+) as a cofactor. Zn(2+) serves as cofactor.

Its subcellular location is the cytoplasm. It catalyses the reaction D-glycero-beta-D-manno-heptose 1,7-bisphosphate + H2O = D-glycero-beta-D-manno-heptose 1-phosphate + phosphate. It participates in nucleotide-sugar biosynthesis; ADP-L-glycero-beta-D-manno-heptose biosynthesis; ADP-L-glycero-beta-D-manno-heptose from D-glycero-beta-D-manno-heptose 7-phosphate: step 2/4. Its pathway is bacterial outer membrane biogenesis; LPS core biosynthesis. Its function is as follows. Converts the D-glycero-beta-D-manno-heptose 1,7-bisphosphate intermediate into D-glycero-beta-D-manno-heptose 1-phosphate by removing the phosphate group at the C-7 position. In Yersinia pestis, this protein is D-glycero-beta-D-manno-heptose-1,7-bisphosphate 7-phosphatase (gmhB).